The following is a 138-amino-acid chain: NADH dehydrogenase [ubiquinone] iron-sulfur protein 2, mitochondrial (138 aa).

Belongs to the complex I 49 kDa subunit family. Core subunit of respiratory chain NADH dehydrogenase (Complex I) which is composed of 45 different subunits. Component of the iron-sulfur (IP) fragment of the enzyme. Interacts with NDUFAF3. Interacts with NDUFAF7. Interacts with CERS2. [4Fe-4S] cluster is required as a cofactor. Dimethylation at Arg-118 by NDUFAF7 takes place after NDUFS2 assembles into the complex I, leading to stabilize the early intermediate complex.

Its subcellular location is the mitochondrion inner membrane. It catalyses the reaction a ubiquinone + NADH + 5 H(+)(in) = a ubiquinol + NAD(+) + 4 H(+)(out). Its function is as follows. Core subunit of the mitochondrial membrane respiratory chain NADH dehydrogenase (Complex I) which catalyzes electron transfer from NADH through the respiratory chain, using ubiquinone as an electron acceptor. Essential for the catalytic activity and assembly of complex I. Redox-sensitive, critical component of the oxygen-sensing pathway in the pulmonary vasculature which plays a key role in acute pulmonary oxygen-sensing and hypoxic pulmonary vasoconstriction. Plays an important role in carotid body sensing of hypoxia. Essential for glia-like neural stem and progenitor cell proliferation, differentiation and subsequent oligodendrocyte or neuronal maturation. This is NADH dehydrogenase [ubiquinone] iron-sulfur protein 2, mitochondrial from Mesocricetus auratus (Golden hamster).